The sequence spans 66 residues: DNA-directed RNA polymerase subunit omega (66 aa).

It belongs to the RNA polymerase subunit omega family. The RNAP catalytic core consists of 2 alpha, 1 beta, 1 beta' and 1 omega subunit. When a sigma factor is associated with the core the holoenzyme is formed, which can initiate transcription.

It catalyses the reaction RNA(n) + a ribonucleoside 5'-triphosphate = RNA(n+1) + diphosphate. Functionally, promotes RNA polymerase assembly. Latches the N- and C-terminal regions of the beta' subunit thereby facilitating its interaction with the beta and alpha subunits. This Clostridium botulinum (strain Alaska E43 / Type E3) protein is DNA-directed RNA polymerase subunit omega.